A 364-amino-acid polypeptide reads, in one-letter code: Oxidized polyvinyl alcohol hydrolase (364 aa).

An N-terminal signal peptide occupies residues 1-34; that stretch reads MFKPVVKSRSSRSFCYLAGCLAMVAATLSSTAQA. Catalysis depends on charge relay system residues Ser190 and Ser293.

This sequence belongs to the peptidase S9A family. In terms of assembly, monomer.

Its subcellular location is the periplasm. It catalyses the reaction nonane-4,6-dione + H2O = pentan-2-one + butanoate + H(+). Functionally, catalyzes the hydrolysis of 4,6-nonanedione, a beta-diketone compound. Also mediates hydrolysis of oxidized polyvinyl alcohol (PVA) in the second step in the degradation of polyvinyl alcohol. Not active toward the monoketone structure. In Sphingopyxis sp. (strain 113P3), this protein is Oxidized polyvinyl alcohol hydrolase (oph).